The sequence spans 305 residues: uncharacterized protein (305 aa).

This is an uncharacterized protein from Sinorhizobium fredii (strain NBRC 101917 / NGR234).